The sequence spans 245 residues: 2,3-bisphosphoglycerate-dependent phosphoglycerate mutase (245 aa).

Residues 8–15 (RHGQSLWN), 21–22 (TG), Arg-60, 87–90 (ERHY), Lys-98, 114–115 (RR), and 183–184 (GN) each bind substrate. The Tele-phosphohistidine intermediate role is filled by His-9. Glu-87 (proton donor/acceptor) is an active-site residue.

It belongs to the phosphoglycerate mutase family. BPG-dependent PGAM subfamily.

It catalyses the reaction (2R)-2-phosphoglycerate = (2R)-3-phosphoglycerate. It participates in carbohydrate degradation; glycolysis; pyruvate from D-glyceraldehyde 3-phosphate: step 3/5. Its function is as follows. Catalyzes the interconversion of 2-phosphoglycerate and 3-phosphoglycerate. In Bacillus thuringiensis subsp. konkukian (strain 97-27), this protein is 2,3-bisphosphoglycerate-dependent phosphoglycerate mutase.